Consider the following 341-residue polypeptide: Holliday junction branch migration complex subunit RuvB (341 aa).

Residues 4–185 (TDRLIVPTAV…FGIVARLEFY (182 aa)) form a large ATPase domain (RuvB-L) region. Residues leucine 24, arginine 25, glycine 66, lysine 69, threonine 70, threonine 71, 132-134 (EDF), arginine 175, tyrosine 185, and arginine 222 contribute to the ATP site. Threonine 70 is a binding site for Mg(2+). Residues 186-256 (SAEELGYIVH…VADAALVMLD (71 aa)) form a small ATPAse domain (RuvB-S) region. The interval 259–341 (RAGLDVMDRK…ATPASDAELF (83 aa)) is head domain (RuvB-H). Residues arginine 295, arginine 314, and arginine 319 each contribute to the DNA site.

Belongs to the RuvB family. As to quaternary structure, homohexamer. Forms an RuvA(8)-RuvB(12)-Holliday junction (HJ) complex. HJ DNA is sandwiched between 2 RuvA tetramers; dsDNA enters through RuvA and exits via RuvB. An RuvB hexamer assembles on each DNA strand where it exits the tetramer. Each RuvB hexamer is contacted by two RuvA subunits (via domain III) on 2 adjacent RuvB subunits; this complex drives branch migration. In the full resolvosome a probable DNA-RuvA(4)-RuvB(12)-RuvC(2) complex forms which resolves the HJ.

It localises to the cytoplasm. It catalyses the reaction ATP + H2O = ADP + phosphate + H(+). Its function is as follows. The RuvA-RuvB-RuvC complex processes Holliday junction (HJ) DNA during genetic recombination and DNA repair, while the RuvA-RuvB complex plays an important role in the rescue of blocked DNA replication forks via replication fork reversal (RFR). RuvA specifically binds to HJ cruciform DNA, conferring on it an open structure. The RuvB hexamer acts as an ATP-dependent pump, pulling dsDNA into and through the RuvAB complex. RuvB forms 2 homohexamers on either side of HJ DNA bound by 1 or 2 RuvA tetramers; 4 subunits per hexamer contact DNA at a time. Coordinated motions by a converter formed by DNA-disengaged RuvB subunits stimulates ATP hydrolysis and nucleotide exchange. Immobilization of the converter enables RuvB to convert the ATP-contained energy into a lever motion, pulling 2 nucleotides of DNA out of the RuvA tetramer per ATP hydrolyzed, thus driving DNA branch migration. The RuvB motors rotate together with the DNA substrate, which together with the progressing nucleotide cycle form the mechanistic basis for DNA recombination by continuous HJ branch migration. Branch migration allows RuvC to scan DNA until it finds its consensus sequence, where it cleaves and resolves cruciform DNA. The polypeptide is Holliday junction branch migration complex subunit RuvB (Thiobacillus denitrificans (strain ATCC 25259 / T1)).